A 227-amino-acid polypeptide reads, in one-letter code: Flagellar L-ring protein 2 (227 aa).

A signal peptide spans 1–17 (MKSKLAITMVSALLLAA). The N-palmitoyl cysteine moiety is linked to residue cysteine 18. Residue cysteine 18 is the site of S-diacylglycerol cysteine attachment.

This sequence belongs to the FlgH family. The basal body constitutes a major portion of the flagellar organelle and consists of four rings (L,P,S, and M) mounted on a central rod.

The protein resides in the cell outer membrane. It localises to the bacterial flagellum basal body. Functionally, assembles around the rod to form the L-ring and probably protects the motor/basal body from shearing forces during rotation. The protein is Flagellar L-ring protein 2 of Chromobacterium violaceum (strain ATCC 12472 / DSM 30191 / JCM 1249 / CCUG 213 / NBRC 12614 / NCIMB 9131 / NCTC 9757 / MK).